The following is a 213-amino-acid chain: Calcineurin B-like protein 8 (213 aa).

A lipid anchor (N-myristoyl glycine) is attached at glycine 2. 4 consecutive EF-hand domains span residues 31 to 66, 67 to 102, 104 to 139, and 148 to 183; these read EVEA…RNSN, KKNL…FHPE, PLGD…LLNE, and AVEQ…NPAL. Aspartate 161, asparagine 163, aspartate 165, lysine 167, and glutamate 172 together coordinate Ca(2+).

Belongs to the calcineurin regulatory subunit family. Homodimer. As to expression, expressed at low levels in roots, shoots, culms, leaves and young spikelets.

The protein localises to the cell membrane. Acts as a calcium sensor. May function as positive regulator of salt stress responses. CBL proteins interact with CIPK serine-threonine protein kinases. Binding of a CBL protein to the regulatory NAF domain of a CIPK protein lead to the activation of the kinase in a calcium-dependent manner. In Oryza sativa subsp. japonica (Rice), this protein is Calcineurin B-like protein 8 (CBL8).